Here is a 359-residue protein sequence, read N- to C-terminus: MNEPSPSDWHLDAYDYELPPDRIAQSAVEPRDHARLLVFPDREQLWHRHFYDLPQLLRPGDLLIVNDTRVIPARLYGQKIETGVPVEVLLVEEHGPGYWLTLVKPGKRLKPGSAIAFGPNPEDPLLVADVEASDPATGGRWLRFRGEAEAFWSQLATLGEMPLPPYIHTTASDPERYQTVYSRELGAVAAPTAGLHFTPELLTTLADMGIATAPVTLHVGIGTFRSVDVEDIRQHEMHSERMMVPAATVEKIQATKAAGGRVIAVGTTSVRAIEGAAASGELKPGSDRVNLFIYPGYRWQIIDGLITNFHLPRSSLMMLVSALIGRDRLLSAYATAIAEQYRFYSFGDAMLILPDAKLP.

The protein belongs to the QueA family. Monomer.

The protein localises to the cytoplasm. The catalysed reaction is 7-aminomethyl-7-carbaguanosine(34) in tRNA + S-adenosyl-L-methionine = epoxyqueuosine(34) in tRNA + adenine + L-methionine + 2 H(+). It participates in tRNA modification; tRNA-queuosine biosynthesis. Functionally, transfers and isomerizes the ribose moiety from AdoMet to the 7-aminomethyl group of 7-deazaguanine (preQ1-tRNA) to give epoxyqueuosine (oQ-tRNA). The chain is S-adenosylmethionine:tRNA ribosyltransferase-isomerase from Synechococcus elongatus (strain ATCC 33912 / PCC 7942 / FACHB-805) (Anacystis nidulans R2).